Consider the following 329-residue polypeptide: Synaptonemal complex central element protein 1 (329 aa).

The disordered stretch occupies residues 1-33; that stretch reads MATRPQPLSVEPEGSADLLHGPEGARGRRGSTQ. Coiled coils occupy residues 28–168 and 194–294; these read RRGS…ETLM and KEQL…ILAQ. Residues 295 to 329 form a disordered region; it reads IQSTQKEEDSSWRTASPKPLEAHKETVQERPSSRT. Positions 314-329 are enriched in basic and acidic residues; that stretch reads LEAHKETVQERPSSRT.

It belongs to the SYCE family. Homodimer. Found in a complex with SYCP1 and SYCE2. Interacts with SYCP1, SYCE2 and SYCE3. Interacts with SIX6OS1.

Its subcellular location is the nucleus. It localises to the chromosome. In terms of biological role, major component of the transverse central element of synaptonemal complexes (SCS), formed between homologous chromosomes during meiotic prophase. Requires SYCP1 in order to be incorporated into the central element. May have a role in the synaptonemal complex assembly, stabilization and recombination. The chain is Synaptonemal complex central element protein 1 (Syce1) from Rattus norvegicus (Rat).